The following is a 95-amino-acid chain: Large ribosomal subunit protein uL23 (95 aa).

This sequence belongs to the universal ribosomal protein uL23 family. Part of the 50S ribosomal subunit. Contacts protein L29, and trigger factor when it is bound to the ribosome.

Functionally, one of the early assembly proteins it binds 23S rRNA. One of the proteins that surrounds the polypeptide exit tunnel on the outside of the ribosome. Forms the main docking site for trigger factor binding to the ribosome. The protein is Large ribosomal subunit protein uL23 of Desulfatibacillum aliphaticivorans.